A 692-amino-acid chain; its full sequence is Translation initiation factor IF-2 (692 aa).

A disordered region spans residues 51 to 114 (KAKPENAKKG…KPAETPGKIT (64 aa)). Residues 59–84 (KGQNQKQSNNQQQNRQKQNQKNQSKP) are compositionally biased toward low complexity. Over residues 85-94 (NKNKKQKGPK) the composition is skewed to basic residues. Residues 193 to 362 (ERPAVVTIMG…LLVSEVEELK (170 aa)) enclose the tr-type G domain. Residues 202-209 (GHVDHGKT) are G1. 202–209 (GHVDHGKT) provides a ligand contact to GTP. The tract at residues 227-231 (GITQH) is G2. The tract at residues 248-251 (DTPG) is G3. GTP-binding positions include 248-252 (DTPGH) and 302-305 (NKMD). Residues 302-305 (NKMD) are G4. The tract at residues 338–340 (SAI) is G5.

The protein belongs to the TRAFAC class translation factor GTPase superfamily. Classic translation factor GTPase family. IF-2 subfamily.

Its subcellular location is the cytoplasm. Functionally, one of the essential components for the initiation of protein synthesis. Protects formylmethionyl-tRNA from spontaneous hydrolysis and promotes its binding to the 30S ribosomal subunits. Also involved in the hydrolysis of GTP during the formation of the 70S ribosomal complex. The protein is Translation initiation factor IF-2 of Oceanobacillus iheyensis (strain DSM 14371 / CIP 107618 / JCM 11309 / KCTC 3954 / HTE831).